Reading from the N-terminus, the 124-residue chain is Small ribosomal subunit protein uS12c (124 aa).

This sequence belongs to the universal ribosomal protein uS12 family. As to quaternary structure, part of the 30S ribosomal subunit.

Its subcellular location is the plastid. The protein localises to the chloroplast. In terms of biological role, with S4 and S5 plays an important role in translational accuracy. Located at the interface of the 30S and 50S subunits. This Ostreococcus tauri protein is Small ribosomal subunit protein uS12c (rps12).